Here is a 130-residue protein sequence, read N- to C-terminus: UPF0251 protein MmarC6_0272 (130 aa).

Belongs to the UPF0251 family.

In Methanococcus maripaludis (strain C6 / ATCC BAA-1332), this protein is UPF0251 protein MmarC6_0272.